The primary structure comprises 70 residues: Insulin (70 aa).

3 disulfide bridges follow: Cys7-Cys56, Cys19-Cys69, and Cys55-Cys60. A propeptide spans 33 to 49 (FVDSLAGYSKHQNGGIS) (c peptide).

This sequence belongs to the insulin family. As to quaternary structure, heterodimer of a B chain and an A chain linked by two disulfide bonds.

It is found in the secreted. In terms of biological role, insulin decreases blood glucose concentration. It increases cell permeability to monosaccharides, amino acids and fatty acids. It accelerates glycolysis, the pentose phosphate cycle, and glycogen synthesis in liver. This chain is Insulin (ins), found in Torpedo marmorata (Marbled electric ray).